Here is a 156-residue protein sequence, read N- to C-terminus: Ribosomal RNA large subunit methyltransferase H (156 aa).

Residues L74, G105, and 124-129 (LSKLTL) each bind S-adenosyl-L-methionine.

The protein belongs to the RNA methyltransferase RlmH family. As to quaternary structure, homodimer.

The protein localises to the cytoplasm. It catalyses the reaction pseudouridine(1915) in 23S rRNA + S-adenosyl-L-methionine = N(3)-methylpseudouridine(1915) in 23S rRNA + S-adenosyl-L-homocysteine + H(+). Functionally, specifically methylates the pseudouridine at position 1915 (m3Psi1915) in 23S rRNA. The protein is Ribosomal RNA large subunit methyltransferase H of Legionella pneumophila (strain Lens).